Here is a 451-residue protein sequence, read N- to C-terminus: MLNMESPQMYADAVQTLAHVDLKKQPQPLPQQATIGQITLTAMSSAQQQQQQQQQQQQQQQQQQQQQQQVTTDANNNATVQDAALLVKQHAMQQMQLSNNNSNNLLQKQMLQQYSTQTDLDELTTQEITLDLQHLIDDQFRDTETLGIFSDMVTSPGGLSATLPPSGMVSAAAKVLQQQQQTLANARQQQHSYGRAALAYMRQAVHSNATYNNHSSDENSSVGSDSSSTIKEEPIDPDYRRHLQESVTGQAAAAFINNSNGLYNAYQSNNLSNNNSSSNNSSNNSSNNSSNSNTNSTNAAQFTNLTTANVLAHHSLPHLTANTAQQLLKHHSKLQQTQQQHAQQQQQHAQQQHRKHSNKHVDKGTEEYRRRRERNNIAVRKSREKAKVRSKEVEERVKSLLKEKDALLRQLSEMTNELSLHKQIYMQLMNHTNPEVSRVCRSFLNTNEHAL.

Disordered stretches follow at residues 210–236 (TYNNHSSDENSSVGSDSSSTIKEEPID), 267–298 (QSNNLSNNNSSSNNSSNNSSNNSSNSNTNSTN), and 328–389 (LKHH…AKVR). Composition is skewed to low complexity over residues 218-228 (ENSSVGSDSSS), 268-298 (SNNLSNNNSSSNNSSNNSSNNSSNSNTNSTN), and 334-350 (LQQTQQQHAQQQQQHAQ). Residues 359–370 (KHVDKGTEEYRR) are compositionally biased toward basic and acidic residues. The bZIP domain occupies 365–428 (TEEYRRRRER…SLHKQIYMQL (64 aa)). Residues 369–398 (RRRRERNNIAVRKSREKAKVRSKEVEERVK) are basic motif. Residues 400–407 (LLKEKDAL) form a leucine-zipper region.

This sequence belongs to the bZIP family. C/EBP subfamily. As to quaternary structure, binds DNA as a dimer and can form stable heterodimers.

The protein localises to the nucleus. Its function is as follows. May be required for the expression of gene products mediating border cell migration. Among the DNA sequences that this protein binds with high affinity is a conserved site within the promoter of its gene. This chain is CCAAT/enhancer-binding protein (slbo), found in Drosophila virilis (Fruit fly).